Consider the following 544-residue polypeptide: MKNKFIFFTLNLLLAVLGAVLFALSHPNYLNLNGFPFFAYIALIPFFLLLKRTKLKFSFLWGAFSGALSYFIFNFWIIFFHPLAIYIIIAKYCILYSVLFFVLKIIDSYFSRYSFIFQTIAWVAFEYLNTLGFLGYSYGIMGYTQWNFPILIRVSSIFGVWGISFLLVFFSACSASFLFEFYKEKDIKNVYQRYKLPMMIWVGTFFAFILYGAFTKIDLSEAQRARIALVQPNRDPWLGNLEVYRNNYEELKNLSEKALKNFPDIELVVWPETAFIPMIRWHYKYTSTYNPNSLLVRELLHFLDNQKVPFLIGNDDGVLDEKFSDNNFDNLEDKRLDYNAALLFIPKKNVSPPEPQTYRKMHLVPFTEHFPYQKLFPRFYEFLKENDTHFWEKGKEANLLEFNNFKIGTPICFEDTFGYISKAFSKKGANIIINLTNDAWANSAVSQYQHLSMAVFRAVENRLPVLRATSSGQTAFIDQNGNIQEMLPPFIKDILVADVTVLTEGHKTVYSYLGDFFGVLCTIVLILNLCFIIINKFIKRSEVK.

Helical transmembrane passes span 30–50, 57–79, 91–111, 115–135, 157–177, and 197–217; these read LNLN…FLLL, FSFL…WIIF, KYCI…SYFS, FIFQ…GFLG, IFGV…SASF, and PMMI…FTKI. The region spanning 225–501 is the CN hydrolase domain; the sequence is ARIALVQPNR…KDILVADVTV (277 aa). Glutamate 272 serves as the catalytic Proton acceptor. Residue lysine 360 is part of the active site. Cysteine 412 (nucleophile) is an active-site residue. Residues 514-534 form a helical membrane-spanning segment; the sequence is GDFFGVLCTIVLILNLCFIII.

This sequence belongs to the CN hydrolase family. Apolipoprotein N-acyltransferase subfamily.

It is found in the cell inner membrane. The enzyme catalyses N-terminal S-1,2-diacyl-sn-glyceryl-L-cysteinyl-[lipoprotein] + a glycerophospholipid = N-acyl-S-1,2-diacyl-sn-glyceryl-L-cysteinyl-[lipoprotein] + a 2-acyl-sn-glycero-3-phospholipid + H(+). Its pathway is protein modification; lipoprotein biosynthesis (N-acyl transfer). Its function is as follows. Catalyzes the phospholipid dependent N-acylation of the N-terminal cysteine of apolipoprotein, the last step in lipoprotein maturation. This Treponema denticola (strain ATCC 35405 / DSM 14222 / CIP 103919 / JCM 8153 / KCTC 15104) protein is Apolipoprotein N-acyltransferase 1.